The chain runs to 340 residues: DNA-directed RNA polymerase subunit alpha (340 aa).

The segment at 1 to 236 (MLSLSKNWNT…EQLQLFISFE (236 aa)) is alpha N-terminal domain (alpha-NTD). The interval 251 to 340 (FAPYLLKRVD…LSKRYEDSYN (90 aa)) is alpha C-terminal domain (alpha-CTD).

The protein belongs to the RNA polymerase alpha chain family. As to quaternary structure, homodimer. The RNAP catalytic core consists of 2 alpha, 1 beta, 1 beta' and 1 omega subunit. When a sigma factor is associated with the core the holoenzyme is formed, which can initiate transcription.

The catalysed reaction is RNA(n) + a ribonucleoside 5'-triphosphate = RNA(n+1) + diphosphate. Functionally, DNA-dependent RNA polymerase catalyzes the transcription of DNA into RNA using the four ribonucleoside triphosphates as substrates. The polypeptide is DNA-directed RNA polymerase subunit alpha (Rickettsia peacockii (strain Rustic)).